The primary structure comprises 473 residues: 7-dehydrocholesterol reductase (473 aa).

The tract at residues 1 to 20 (MGERRRANASRGDKKVANGE) is disordered. 6 helical membrane-spanning segments follow: residues 36–56 (FSLA…YYFV), 97–117 (IYLA…DILH), 175–195 (WIPL…FALV), 264–284 (VTNS…DFFW), 304–324 (LGWG…LYLV), and 329–349 (ELST…YYIF). NADP(+)-binding positions include Lys-356, Arg-360, Met-393, Trp-398, and 405–406 (NY). Residues 419-439 (ACGFDHLLPYFYFIYMTILLV) traverse the membrane as a helical segment. NADP(+) contacts are provided by residues Asp-445, 449–453 (CSSKY), and Tyr-460.

Belongs to the ERG4/ERG24 family.

The protein localises to the endoplasmic reticulum membrane. It carries out the reaction cholesterol + NADP(+) = 7-dehydrocholesterol + NADPH + H(+). The enzyme catalyses 7-dehydrodesmosterol + NADPH + H(+) = desmosterol + NADP(+). Its pathway is steroid biosynthesis; cholesterol biosynthesis. In terms of biological role, catalyzes the last step of the cholesterol synthesis pathway, which transforms cholesta-5,7-dien-3beta-ol (7-dehydrocholesterol,7-DHC) into cholesterol by reducing the C7-C8 double bond of its sterol core. Can also metabolize cholesta-5,7,24-trien-3beta-ol (7-dehydrodemosterol, 7-DHD) to desmosterol, which is then metabolized by the Delta(24)-sterol reductase (DHCR24) to cholesterol. Modulates ferroptosis (a form of regulated cell death driven by iron-dependent lipid peroxidation) through the metabolic breakdown of the anti-ferroptotic metabolites 7-DHC and 7-DHD which, when accumulated, divert the propagation of peroxyl radical-mediated damage from phospholipid components to its sterol core, protecting plasma and mitochondrial membranes from phospholipid autoxidation. The polypeptide is 7-dehydrocholesterol reductase (dhcr7) (Xenopus laevis (African clawed frog)).